A 318-amino-acid chain; its full sequence is Transaldolase (318 aa).

Residue Lys-132 is the Schiff-base intermediate with substrate of the active site.

This sequence belongs to the transaldolase family. Type 1 subfamily. As to quaternary structure, homodimer.

It localises to the cytoplasm. It catalyses the reaction D-sedoheptulose 7-phosphate + D-glyceraldehyde 3-phosphate = D-erythrose 4-phosphate + beta-D-fructose 6-phosphate. It participates in carbohydrate degradation; pentose phosphate pathway; D-glyceraldehyde 3-phosphate and beta-D-fructose 6-phosphate from D-ribose 5-phosphate and D-xylulose 5-phosphate (non-oxidative stage): step 2/3. Functionally, transaldolase is important for the balance of metabolites in the pentose-phosphate pathway. The protein is Transaldolase of Shewanella pealeana (strain ATCC 700345 / ANG-SQ1).